We begin with the raw amino-acid sequence, 257 residues long: uncharacterized protein (257 aa).

An ATP-binding site is contributed by Gly7 to Thr14.

This sequence to M.jannaschii MJ0084 and MJ0685.

This is an uncharacterized protein from Methanocaldococcus jannaschii (strain ATCC 43067 / DSM 2661 / JAL-1 / JCM 10045 / NBRC 100440) (Methanococcus jannaschii).